The sequence spans 476 residues: Carbamoyl phosphate synthase arginine-specific small chain (476 aa).

The transit peptide at 1 to 24 directs the protein to the mitochondrion; it reads MFSHLLKPAARSAGLLGHVNRRYL. Residues 228 to 415 enclose the Glutamine amidotransferase type-1 domain; it reads HVALIDCGVK…IQNVQRYKDH (188 aa). The active-site Nucleophile is C304. Active-site residues include H388 and E390.

The protein belongs to the CarA family. In terms of assembly, heterodimer composed of 2 chains; the small (or glutamine) chain promotes the hydrolysis of glutamine to ammonia, which is used by the large (or ammonia) chain to synthesize carbamoyl phosphate.

It is found in the mitochondrion matrix. It carries out the reaction hydrogencarbonate + L-glutamine + 2 ATP + H2O = carbamoyl phosphate + L-glutamate + 2 ADP + phosphate + 2 H(+). The enzyme catalyses L-glutamine + H2O = L-glutamate + NH4(+). Its pathway is amino-acid biosynthesis; L-arginine biosynthesis; carbamoyl phosphate from bicarbonate: step 1/1. Functionally, small subunit of the arginine-specific carbamoyl phosphate synthase (CPSase). CPSase catalyzes the formation of carbamoyl phosphate from the ammonia moiety of glutamine, carbonate, and phosphate donated by ATP, the first step of the arginine biosynthetic pathway. The small subunit (glutamine amidotransferase) binds and cleaves glutamine to supply the large subunit with the substrate ammonia. This Phaeosphaeria nodorum (strain SN15 / ATCC MYA-4574 / FGSC 10173) (Glume blotch fungus) protein is Carbamoyl phosphate synthase arginine-specific small chain (CPA1).